Here is a 146-residue protein sequence, read N- to C-terminus: Large ribosomal subunit protein uL13 (146 aa).

The disordered stretch occupies residues 125–146; that stretch reads YAGPKHPHAAQQPKVYEPRPRG.

It belongs to the universal ribosomal protein uL13 family. Part of the 50S ribosomal subunit.

Functionally, this protein is one of the early assembly proteins of the 50S ribosomal subunit, although it is not seen to bind rRNA by itself. It is important during the early stages of 50S assembly. This chain is Large ribosomal subunit protein uL13, found in Roseiflexus sp. (strain RS-1).